Here is a 63-residue protein sequence, read N- to C-terminus: Small ribosomal subunit protein eS27 (63 aa).

Zn(2+) contacts are provided by cysteine 18, cysteine 21, cysteine 37, and cysteine 40. Residues 18–40 form a C4-type zinc finger; sequence CIDCGNEQIVFSHPATKVRCLIC.

Belongs to the eukaryotic ribosomal protein eS27 family. As to quaternary structure, part of the 30S ribosomal subunit. It depends on Zn(2+) as a cofactor.

In Pyrococcus furiosus (strain ATCC 43587 / DSM 3638 / JCM 8422 / Vc1), this protein is Small ribosomal subunit protein eS27.